Here is a 78-residue protein sequence, read N- to C-terminus: Small ribosomal subunit protein uS17 (78 aa).

It belongs to the universal ribosomal protein uS17 family. Part of the 30S ribosomal subunit.

One of the primary rRNA binding proteins, it binds specifically to the 5'-end of 16S ribosomal RNA. In Maricaulis maris (strain MCS10) (Caulobacter maris), this protein is Small ribosomal subunit protein uS17.